Here is a 581-residue protein sequence, read N- to C-terminus: Caprolactamase subunit beta (581 aa).

Residues Asp41, His99, Asp102, and His124 each contribute to the Zn(2+) site.

It belongs to the HyuB family. In terms of assembly, the caprolactamase is a heterotetramer composed of two alpha subunits (CapA) and two beta subunits (CapB). It depends on Zn(2+) as a cofactor.

With respect to regulation, activity is dependent on the presence of ATP and bicarbonate. The requirement for bicarbonate may be related to allosteric activation through conformational effects, but it is also conceivable that carboxyphosphate is formed and acts as a mediator in caprolactam activation, forming carboxy- or phospholactim. Component of a caprolactamase involved in the degradation of caprolactam, an industrial compound mainly used in the production of Nylon 6. Catalyzes the ATP-dependent hydrolysis of the caprolactam ring to form 6-aminocaproic acid (6-ACA). The beta subunit is responsible for hydrolytic lactam ring opening. The enzyme cannot use 5-oxoproline. The sequence is that of Caprolactamase subunit beta from Pseudomonas jessenii.